A 103-amino-acid chain; its full sequence is Cell division protein FtsB (103 aa).

At methionine 1–lysine 3 the chain is on the cytoplasmic side. The helical transmembrane segment at leucine 4–phenylalanine 21 threads the bilayer. Topologically, residues glycine 22–arginine 103 are periplasmic. The stretch at arginine 31–alanine 71 forms a coiled coil.

It belongs to the FtsB family. As to quaternary structure, part of a complex composed of FtsB, FtsL and FtsQ.

The protein resides in the cell inner membrane. In terms of biological role, essential cell division protein. May link together the upstream cell division proteins, which are predominantly cytoplasmic, with the downstream cell division proteins, which are predominantly periplasmic. This is Cell division protein FtsB from Escherichia coli O81 (strain ED1a).